A 496-amino-acid chain; its full sequence is MSEDLFVSINFPNGKSVKQPIGLYINGEWHKSAETWETVDPSIEEVIAKVYLAGEKEIDYAVKSAKEAFKTWKKVPGSEKGELLMKLAELTEKHADTLAAIEAMDSGKPLVSNARGDVDGTIALLRYCAGWADKIYGQVIPTGPEKLAYAKRTPIGVCGQIVPWNYPLNMAGWKIAPALAAGNCIIIKSAETTPLSLLYFATLVEEAGFPKGVVNIISGLGTVAGSYMAKHPGIDKIAFTGSTKVGVIVQQLAASNLKAVTLECGGKSPFLVFEDADLDQAVKWAALGIMYNSGQICTSNSRIYVQDSVYDKFIELFKKHVIQDYIVGMPFDDNTVVGPVVNKTQYNRIKNYIEQGKKEGAKLVLGDEPLPLKQGYFISPTIFADCSENMTIVKEEIFGPVVAISKFKTEDEAIEKANNTTYGLAAMCFTKDLERAHRVSDELEAGMVFINSTENSDIQAPFGGIKMSGIGNELGSNGIEMYTQIKAVHINFNNKL.

241 to 246 is an NAD(+) binding site; it reads GSTKVG. Glu-263 functions as the Proton acceptor in the catalytic mechanism. Residue Cys-297 is the Nucleophile of the active site.

The protein belongs to the aldehyde dehydrogenase family.

The protein localises to the cytoplasm. The protein resides in the nucleus. The polypeptide is Putative aldehyde dehydrogenase-like protein C922.07c (Schizosaccharomyces pombe (strain 972 / ATCC 24843) (Fission yeast)).